A 545-amino-acid chain; its full sequence is Glucose-6-phosphate isomerase (545 aa).

The active-site Proton donor is the Glu-351. Residues His-382 and Lys-510 contribute to the active site.

This sequence belongs to the GPI family.

The protein resides in the cytoplasm. The catalysed reaction is alpha-D-glucose 6-phosphate = beta-D-fructose 6-phosphate. The protein operates within carbohydrate biosynthesis; gluconeogenesis. Its pathway is carbohydrate degradation; glycolysis; D-glyceraldehyde 3-phosphate and glycerone phosphate from D-glucose: step 2/4. Its function is as follows. Catalyzes the reversible isomerization of glucose-6-phosphate to fructose-6-phosphate. The sequence is that of Glucose-6-phosphate isomerase from Helicobacter pylori (strain J99 / ATCC 700824) (Campylobacter pylori J99).